Reading from the N-terminus, the 325-residue chain is Probable tRNA pseudouridine synthase B (325 aa).

The active-site Nucleophile is Asp71. Residues 238 to 313 (LPKIYVKDSA…VAASIERVIM (76 aa)) form the PUA domain.

The protein belongs to the pseudouridine synthase TruB family. Type 2 subfamily.

It catalyses the reaction uridine(55) in tRNA = pseudouridine(55) in tRNA. Functionally, could be responsible for synthesis of pseudouridine from uracil-55 in the psi GC loop of transfer RNAs. This is Probable tRNA pseudouridine synthase B from Korarchaeum cryptofilum (strain OPF8).